We begin with the raw amino-acid sequence, 316 residues long: Pantothenate kinase (316 aa).

Residue 95–102 (GSVAVGKS) coordinates ATP.

It belongs to the prokaryotic pantothenate kinase family.

The protein localises to the cytoplasm. The catalysed reaction is (R)-pantothenate + ATP = (R)-4'-phosphopantothenate + ADP + H(+). It participates in cofactor biosynthesis; coenzyme A biosynthesis; CoA from (R)-pantothenate: step 1/5. The protein is Pantothenate kinase of Klebsiella pneumoniae (strain 342).